The sequence spans 199 residues: N-(5'-phosphoribosyl)anthranilate isomerase (199 aa).

Belongs to the TrpF family.

It carries out the reaction N-(5-phospho-beta-D-ribosyl)anthranilate = 1-(2-carboxyphenylamino)-1-deoxy-D-ribulose 5-phosphate. Its pathway is amino-acid biosynthesis; L-tryptophan biosynthesis; L-tryptophan from chorismate: step 3/5. The polypeptide is N-(5'-phosphoribosyl)anthranilate isomerase (Streptococcus pneumoniae (strain ATCC 700669 / Spain 23F-1)).